The following is a 67-amino-acid chain: Large ribosomal subunit protein uL29 (67 aa).

This sequence belongs to the universal ribosomal protein uL29 family.

This Halorhodospira halophila (strain DSM 244 / SL1) (Ectothiorhodospira halophila (strain DSM 244 / SL1)) protein is Large ribosomal subunit protein uL29.